A 420-amino-acid chain; its full sequence is Adenylosuccinate synthetase (420 aa).

Residues 12-18 and 40-42 each bind GTP; these read GDEGKGK and GHT. Asp13 functions as the Proton acceptor in the catalytic mechanism. Asp13 and Gly40 together coordinate Mg(2+). Residues 13 to 16, 38 to 41, Thr128, Arg142, Gln221, Thr236, and Arg299 contribute to the IMP site; these read DEGK and NAGH. The active-site Proton donor is His41. 295 to 301 contacts substrate; the sequence is ATTGRPR. Residues Arg301, 327–329, and 399–401 contribute to the GTP site; these read KAD and SYG.

It belongs to the adenylosuccinate synthetase family. In terms of assembly, homodimer. It depends on Mg(2+) as a cofactor.

Its subcellular location is the cytoplasm. The enzyme catalyses IMP + L-aspartate + GTP = N(6)-(1,2-dicarboxyethyl)-AMP + GDP + phosphate + 2 H(+). It functions in the pathway purine metabolism; AMP biosynthesis via de novo pathway; AMP from IMP: step 1/2. In terms of biological role, plays an important role in the de novo pathway of purine nucleotide biosynthesis. Catalyzes the first committed step in the biosynthesis of AMP from IMP. This is Adenylosuccinate synthetase from Petrotoga mobilis (strain DSM 10674 / SJ95).